Here is a 424-residue protein sequence, read N- to C-terminus: Inhibin beta A chain (424 aa).

A signal peptide spans methionine 1–serine 20. A propeptide spanning residues serine 21 to arginine 308 is cleaved from the precursor. N-linked (GlcNAc...) asparagine glycosylation is present at asparagine 165. The segment covering glutamate 264–serine 275 has biased composition (basic and acidic residues). The segment at glutamate 264–arginine 306 is disordered. Disulfide bonds link cysteine 312-cysteine 320, cysteine 319-cysteine 389, cysteine 348-cysteine 421, and cysteine 352-cysteine 423.

It belongs to the TGF-beta family. In terms of assembly, dimeric, linked by one or more disulfide bonds. Inhibin A is a dimer of alpha/INHA and beta-A/INHBA. Activin A is a homodimer of beta-A/INHBA. Activin AB is a dimer of beta-A/INHBA and beta-B/INHBB. Interacts with FST and FSTL3; these interactions prevent activin A interaction to its type II receptor. Activin A interacts with ACVR2A. Activin A interacts with BMPR2. Inhibin A interacts with ACVR1; this interaction creates a non-signaling complex (NSC) that inhibits ACVR1-mediated BMP signaling. Inhibin A interacts with ACVR2A.

The protein localises to the secreted. Inhibins/activins are involved in regulating a number of diverse functions such as hypothalamic and pituitary hormone secretion, gonadal hormone secretion, germ cell development and maturation, erythroid differentiation, insulin secretion, nerve cell survival, embryonic axial development or bone growth, depending on their subunit composition. Its function is as follows. Activin A is a homodimer of INHBA that plays a role in several essential biological processes including embryonic development, stem cell maintenance and differentiation, haematopoiesis, cell proliferation and tissue fibrosis. Signals through type I (such as ACVR1B or ACVR1C) and type II receptors (such as ACVR2A, ACVR2B or BMPR2) which, upon ligand binding, phosphorylate SMAD2 and SMAD3 intracellular signaling mediators that form a complex with SMAD4, translocate to the nucleus and modulate gene expression. Can also activate alternative non-canonical intracellular signaling pathways including the p38 MAPK, extracellular signal-regulated kinases 1/2 (ERK1/2) and c-Jun N-terminal kinases (JNKs) to modulate cell migration and differentiation. Alternatively, promotes osteoblastic differentiation via ACVRL1-SMAD1/5/9 pathway. In addition, can engage the type I receptor ACVR1 to form an ACVR1-activin A-type II receptor non-signaling complex (NSC) that renders receptors unavailable for engagement with BMPs, hence resulting in an apparent inhibition of ACVR1-mediated BMP signaling. Functionally, inhibin A is a dimer of alpha/INHA and beta-A/INHBA that functions as a feedback regulator in the hypothalamic-pituitary-gonadal (HPG) axis. Inhibits the secretion of FSH from the anterior pituitary gland by acting on pituitary gonadotrope cells. Antagonizes activin A by binding to the proteoglycan, betaglycan, and forming a stable complex with and, thereby, sequestering type II activin receptors while excluding type I receptor. In Rattus norvegicus (Rat), this protein is Inhibin beta A chain (Inhba).